We begin with the raw amino-acid sequence, 171 residues long: MPIPTVTLRALRADITTLACDAIVNAANSALLGGGGVDGAIHRAAGPELLEACRALHGCRTGQAKITPGFLLPARYIIHTVGPIWRGGRQDEAALLAACYRNSLALAKQHDVRTIAFPCISTGVYGFPPQLAAPIAVRTVREHGADLDDIVFCCFSAADLALYETALNEAR.

Residues 1–171 form the Macro domain; the sequence is MPIPTVTLRA…LYETALNEAR (171 aa).

Belongs to the MacroD-type family.

The chain is Macro domain-containing protein RSc0334 from Ralstonia nicotianae (strain ATCC BAA-1114 / GMI1000) (Ralstonia solanacearum).